Reading from the N-terminus, the 87-residue chain is U3-theraphotoxin-Hhn1m (87 aa).

An N-terminal signal peptide occupies residues 1-24 (MVNMKASMFLTFAGLVLLFVVCYA). The propeptide occupies 25–52 (SESEEKEFPKEMLSSIFAVDNDFKQEER). Disulfide bonds link Cys54–Cys67, Cys61–Cys72, and Cys66–Cys79.

Belongs to the neurotoxin 10 (Hwtx-1) family. 51 (Hntx-8) subfamily. Hntx-8 sub-subfamily. As to expression, expressed by the venom gland.

The protein localises to the secreted. In terms of biological role, ion channel inhibitor. This chain is U3-theraphotoxin-Hhn1m, found in Cyriopagopus hainanus (Chinese bird spider).